Reading from the N-terminus, the 329-residue chain is tRNA(Ile)-lysidine synthase, chloroplastic (329 aa).

Position 32–37 (32–37) interacts with ATP; sequence SGGQDS.

Belongs to the tRNA(Ile)-lysidine synthase family.

Its subcellular location is the plastid. The protein resides in the chloroplast. The catalysed reaction is cytidine(34) in tRNA(Ile2) + L-lysine + ATP = lysidine(34) in tRNA(Ile2) + AMP + diphosphate + H(+). Its function is as follows. Ligates lysine onto the cytidine present at position 34 of the AUA codon-specific tRNA(Ile) that contains the anticodon CAU, in an ATP-dependent manner. Cytidine is converted to lysidine, thus changing the amino acid specificity of the tRNA from methionine to isoleucine. In Pyropia yezoensis (Susabi-nori), this protein is tRNA(Ile)-lysidine synthase, chloroplastic.